The following is a 98-amino-acid chain: Envelope glycoprotein N (98 aa).

The N-terminal stretch at 1-24 is a signal peptide; it reads MVSSAGLSLTLVAALCALVAPALS. The Virion surface segment spans residues 25–60; that stretch reads SIVSTEGPLPLLREESRINFWNAACAARGVPVDQPT. A helical membrane pass occupies residues 61–81; sequence AAAVTFYICLLAVLVVALGYA. Residues 82–98 lie on the Intravirion side of the membrane; sequence TRTCTRMLHASPAGRRV.

This sequence belongs to the herpesviridae glycoprotein N family. Interacts (via N-terminus) with gM (via N-terminus). The gM-gN heterodimer forms the gCII complex. In terms of processing, O-glycosylated.

It is found in the virion membrane. Its subcellular location is the host membrane. The protein resides in the host Golgi apparatus. It localises to the host trans-Golgi network. Envelope glycoprotein necessary for proper maturation of gM and modulation of its membrane fusion activity. Also plays a critical role in virion morphogenesis. This chain is Envelope glycoprotein N, found in Suid herpesvirus 1 (SuHV-1).